The following is a 297-amino-acid chain: MIPLSIRVPASTANVGPGFDSVGIALSLYLHVVVKEKSDKWQVIHSFEDSIPTDDKNLIVSTACKVCPSLSPHIIEVTSNIPLTRGLGSSASAIVAGIELANQLGKLNLTIDQKVQIATNFEGHPDNVAASILGGTVIGALDGKNVSVVRIESKELGVISLIPNEELNTDESRSVLPDVFPFHEAVKASAISNVLVAALCQKKWEVVGEMMERDHFHEPYRLELVPLLPSIRKCAKEFGAYGTALSGAGPSIFILTPYEKRQEIAEQLARVFTSMKVCELEIDHRGITVNKKEHIGL.

82–92 contributes to the ATP binding site; the sequence is PLTRGLGSSAS.

Belongs to the GHMP kinase family. Homoserine kinase subfamily.

The protein resides in the cytoplasm. It catalyses the reaction L-homoserine + ATP = O-phospho-L-homoserine + ADP + H(+). Its pathway is amino-acid biosynthesis; L-threonine biosynthesis; L-threonine from L-aspartate: step 4/5. Functionally, catalyzes the ATP-dependent phosphorylation of L-homoserine to L-homoserine phosphate. The sequence is that of Homoserine kinase from Bacillus thuringiensis subsp. konkukian (strain 97-27).